A 1039-amino-acid chain; its full sequence is Serine/threonine-protein kinase Tao (1039 aa).

A Protein kinase domain is found at phenylalanine 27–valine 280. Residues isoleucine 33–valine 41 and lysine 56 contribute to the ATP site. Residue aspartate 150 is the Proton acceptor of the active site. 4 disordered regions span residues serine 324–serine 457, glycine 485–arginine 508, histidine 629–histidine 648, and tryptophan 677–glutamate 707. Over residues serine 341–glutamate 350 the composition is skewed to polar residues. Low complexity predominate over residues serine 359–glutamine 376. Positions asparagine 377 to glutamine 387 are enriched in basic residues. Composition is skewed to low complexity over residues glutamine 388–alanine 397 and proline 413–asparagine 429. Polar residues predominate over residues histidine 444–asparagine 454. A compositionally biased stretch (gly residues) spans glycine 485–alanine 500. Coiled-coil stretches lie at residues glutamine 631 to lysine 765 and lysine 835 to serine 993. Residues tryptophan 677–aspartate 693 are compositionally biased toward basic and acidic residues.

This sequence belongs to the protein kinase superfamily. STE Ser/Thr protein kinase family. STE20 subfamily. Interacts with Schip1; the interaction enhances Tao kinase activity. Mg(2+) is required as a cofactor. Post-translationally, autophosphorylated. In the posterior midgut, expressed in almost all intestinal cell types including intestinal stem cells and enterocytes (at protein level). Maternally expressed, ubiquitously distributed in the egg and early embryo and enriched in the germ plasm at the posterior pole of the early embryo including the pole cells.

Its subcellular location is the cytoplasm. The protein resides in the cytoskeleton. It localises to the spindle. The protein localises to the membrane. It is found in the perikaryon. Its subcellular location is the cell cortex. The protein resides in the cell projection. It localises to the axon. The catalysed reaction is L-seryl-[protein] + ATP = O-phospho-L-seryl-[protein] + ADP + H(+). The enzyme catalyses L-threonyl-[protein] + ATP = O-phospho-L-threonyl-[protein] + ADP + H(+). Serine/threonine-protein kinase which regulates the Hippo/SWH (Sav/Wts/Hpo) signaling pathway, a signaling pathway that plays a pivotal role in organ size control and tumor suppression by restricting proliferation and promoting apoptosis. The core of this pathway is composed of a kinase cascade wherein Hippo (hpo), in complex with its regulatory protein Salvador (sav), phosphorylates and activates Warts (wts) in complex with its regulatory protein Mats, which in turn phosphorylates and inactivates the Yorkie (yki) oncoprotein. In imaginal cells, phosphorylates and activates hpo and leads to repression of yki. In the midgut, negatively regulates the proliferation of intestinal stem cells through the Hippo/SWH pathway. Independent of the hippo/SWH pathway, regulates epithelial morphogenesis in follicle cells by promoting the endocytosis of Fas2 and reducing lateral adhesion between epithelial cells which, in turn, permits shrinking of the lateral membrane and initiates morphogenesis of the squamous epithelium. Required for the development of both the mushroom body and the ellipsoid body in the brain and may act as a negative regulator of the par-1 kinase. Negatively regulates the JNK pathway which increases sensitivity to ethanol exposure. Plays a role in the control of cell shape by negatively regulating the growth of microtubule plus-ends as they contact the actin-rich cell cortex. Required for the induction of apoptosis in pole cells by promoting expression of skl which enhances activity of the apoptosis activator hid. Functionally, induces in vitro expression of large, highly dynamic, microtubule-dependent lamellopodia-like cytoplasmic expansions which constantly probe the environment. In terms of biological role, induces in vitro expression of actin-dependent filopodia-like cytoplasmic protrusions which firmly attach to the substrate. Antagonizes the activity of isoform D. The sequence is that of Serine/threonine-protein kinase Tao from Drosophila melanogaster (Fruit fly).